The chain runs to 499 residues: Ethanolamine-phosphate phospho-lyase (499 aa).

Lys278 carries the post-translational modification N6-(pyridoxal phosphate)lysine.

It belongs to the class-III pyridoxal-phosphate-dependent aminotransferase family. Homotetramer. Pyridoxal 5'-phosphate is required as a cofactor.

It localises to the mitochondrion. The catalysed reaction is phosphoethanolamine + H2O = acetaldehyde + NH4(+) + phosphate. In terms of biological role, catalyzes the pyridoxal-phosphate-dependent breakdown of phosphoethanolamine, converting it to ammonia, inorganic phosphate and acetaldehyde. In Mus musculus (Mouse), this protein is Ethanolamine-phosphate phospho-lyase (Etnppl).